The sequence spans 347 residues: Uroporphyrinogen decarboxylase (347 aa).

Residues 23–27, Asp-73, Tyr-150, Thr-205, and His-323 contribute to the substrate site; that span reads RQAGR.

This sequence belongs to the uroporphyrinogen decarboxylase family. Homodimer.

The protein localises to the cytoplasm. It catalyses the reaction uroporphyrinogen III + 4 H(+) = coproporphyrinogen III + 4 CO2. The protein operates within porphyrin-containing compound metabolism; protoporphyrin-IX biosynthesis; coproporphyrinogen-III from 5-aminolevulinate: step 4/4. Catalyzes the decarboxylation of four acetate groups of uroporphyrinogen-III to yield coproporphyrinogen-III. In Ruthia magnifica subsp. Calyptogena magnifica, this protein is Uroporphyrinogen decarboxylase.